Reading from the N-terminus, the 197-residue chain is MDFYIRHTWDSLPVDHKPVKIRFSPGEDGLLMQVTAPFFNDPPAPAGPPGEPFPGLWDYEVVESFFLNSETEQYLEVEVCPYGQHLILLLNGKHNAFMQQLPLSFRANIEDSTWHGEALLPWRYFPQGINKMNSYAIHGSGAGRTYESLYPVPREDLQEGQGPDFHRLEYFQDFTLQSIMGEDWVQPESDLWDLARK.

Belongs to the UPF0462 family.

This chain is UPF0462 protein C4orf33 homolog, found in Danio rerio (Zebrafish).